The primary structure comprises 516 residues: Probable D,D-dipeptide-binding periplasmic protein DdpA (516 aa).

Positions 1 to 25 (MKRSISFRPTLLALVLATNFPVAHA) are cleaved as a signal peptide.

The protein belongs to the bacterial solute-binding protein 5 family. As to quaternary structure, the complex is composed of two ATP-binding proteins (DdpD and DdpF), two transmembrane proteins (DdpB and DdpC) and a solute-binding protein (DdpA).

The protein resides in the periplasm. Functionally, part of the ABC transporter complex DdpABCDF, which is probably involved in D,D-dipeptide transport. In Escherichia coli (strain K12), this protein is Probable D,D-dipeptide-binding periplasmic protein DdpA (ddpA).